Consider the following 235-residue polypeptide: Segregation and condensation protein A (235 aa).

Belongs to the ScpA family. Component of a cohesin-like complex composed of ScpA, ScpB and the Smc homodimer, in which ScpA and ScpB bind to the head domain of Smc. The presence of the three proteins is required for the association of the complex with DNA.

It is found in the cytoplasm. Participates in chromosomal partition during cell division. May act via the formation of a condensin-like complex containing Smc and ScpB that pull DNA away from mid-cell into both cell halves. In Streptococcus uberis (strain ATCC BAA-854 / 0140J), this protein is Segregation and condensation protein A.